A 185-amino-acid chain; its full sequence is Elongation factor P (185 aa).

Belongs to the elongation factor P family.

Its subcellular location is the cytoplasm. Its pathway is protein biosynthesis; polypeptide chain elongation. In terms of biological role, involved in peptide bond synthesis. Stimulates efficient translation and peptide-bond synthesis on native or reconstituted 70S ribosomes in vitro. Probably functions indirectly by altering the affinity of the ribosome for aminoacyl-tRNA, thus increasing their reactivity as acceptors for peptidyl transferase. In Lysinibacillus sphaericus (strain C3-41), this protein is Elongation factor P.